The primary structure comprises 403 residues: ATP phosphoribosyltransferase regulatory subunit (403 aa).

This sequence belongs to the class-II aminoacyl-tRNA synthetase family. HisZ subfamily. As to quaternary structure, heteromultimer composed of HisG and HisZ subunits.

It localises to the cytoplasm. The protein operates within amino-acid biosynthesis; L-histidine biosynthesis; L-histidine from 5-phospho-alpha-D-ribose 1-diphosphate: step 1/9. Functionally, required for the first step of histidine biosynthesis. May allow the feedback regulation of ATP phosphoribosyltransferase activity by histidine. The chain is ATP phosphoribosyltransferase regulatory subunit from Nostoc punctiforme (strain ATCC 29133 / PCC 73102).